Here is a 97-residue protein sequence, read N- to C-terminus: YcgL domain-containing protein APP7_0754 (97 aa).

Positions 6-90 (NLCAIYKSPK…PPENLLKTFL (85 aa)) constitute a YcgL domain.

The protein is YcgL domain-containing protein APP7_0754 of Actinobacillus pleuropneumoniae serotype 7 (strain AP76).